Consider the following 305-residue polypeptide: UDP-3-O-acyl-N-acetylglucosamine deacetylase (305 aa).

The Zn(2+) site is built by histidine 79, histidine 238, and aspartate 242. Residue histidine 265 is the Proton donor of the active site.

The protein belongs to the LpxC family. It depends on Zn(2+) as a cofactor.

It catalyses the reaction a UDP-3-O-[(3R)-3-hydroxyacyl]-N-acetyl-alpha-D-glucosamine + H2O = a UDP-3-O-[(3R)-3-hydroxyacyl]-alpha-D-glucosamine + acetate. The protein operates within glycolipid biosynthesis; lipid IV(A) biosynthesis; lipid IV(A) from (3R)-3-hydroxytetradecanoyl-[acyl-carrier-protein] and UDP-N-acetyl-alpha-D-glucosamine: step 2/6. Functionally, catalyzes the hydrolysis of UDP-3-O-myristoyl-N-acetylglucosamine to form UDP-3-O-myristoylglucosamine and acetate, the committed step in lipid A biosynthesis. This is UDP-3-O-acyl-N-acetylglucosamine deacetylase from Vibrio vulnificus (strain CMCP6).